The following is a 313-amino-acid chain: Probable pyridoxal 5'-phosphate synthase subunit PDX1.2 (313 aa).

Residue Asp42 coordinates D-ribose 5-phosphate. Lys99 functions as the Schiff-base intermediate with D-ribose 5-phosphate in the catalytic mechanism. Gly171 serves as a coordination point for D-ribose 5-phosphate. Arg183 is a D-glyceraldehyde 3-phosphate binding site. D-ribose 5-phosphate contacts are provided by residues Gly232 and 253-254 (GS).

The protein belongs to the PdxS/SNZ family.

The catalysed reaction is aldehydo-D-ribose 5-phosphate + D-glyceraldehyde 3-phosphate + L-glutamine = pyridoxal 5'-phosphate + L-glutamate + phosphate + 3 H2O + H(+). Its pathway is cofactor biosynthesis; pyridoxal 5'-phosphate biosynthesis. Functionally, catalyzes the formation of pyridoxal 5'-phosphate from ribose 5-phosphate (RBP), glyceraldehyde 3-phosphate (G3P) and ammonia. The ammonia is provided by PDX2. Can also use ribulose 5-phosphate and dihydroxyacetone phosphate as substrates, resulting from enzyme-catalyzed isomerization of RBP and G3P, respectively. Also plays an indirect role in resistance to singlet oxygen-generating photosensitizers. This is Probable pyridoxal 5'-phosphate synthase subunit PDX1.2 (PDX12) from Oryza sativa subsp. japonica (Rice).